We begin with the raw amino-acid sequence, 485 residues long: Cysteine--tRNA ligase (485 aa).

Residue C27 coordinates Zn(2+). The 'HIGH' region signature appears at 29–39 (ITAYDLCHIGH). Positions 208, 233, and 237 each coordinate Zn(2+). The 'KMSKS' region signature appears at 265 to 269 (KMSKS). An ATP-binding site is contributed by K268.

This sequence belongs to the class-I aminoacyl-tRNA synthetase family. In terms of assembly, monomer. Zn(2+) is required as a cofactor.

Its subcellular location is the cytoplasm. The catalysed reaction is tRNA(Cys) + L-cysteine + ATP = L-cysteinyl-tRNA(Cys) + AMP + diphosphate. The protein is Cysteine--tRNA ligase of Nitratidesulfovibrio vulgaris (strain DP4) (Desulfovibrio vulgaris).